Here is a 96-residue protein sequence, read N- to C-terminus: RNA-binding protein Hfq (96 aa).

A Sm domain is found at 9 to 68; that stretch reads DPYLNALRRERIPVSIYLVNGIKLQGQIESFDQFVILLKNTVNQMVYKHAISTVVPARSV. The interval 67–96 is disordered; sequence SVSHHNNSNNSNQQNYQQEQQTDSNVEKAE. The segment covering 72-87 has biased composition (low complexity); that stretch reads NNSNNSNQQNYQQEQQ.

The protein belongs to the Hfq family. Homohexamer.

In terms of biological role, RNA chaperone that binds small regulatory RNA (sRNAs) and mRNAs to facilitate mRNA translational regulation in response to envelope stress, environmental stress and changes in metabolite concentrations. Also binds with high specificity to tRNAs. The polypeptide is RNA-binding protein Hfq (Pasteurella multocida (strain Pm70)).